A 76-amino-acid chain; its full sequence is uncharacterized protein (76 aa).

The chain crosses the membrane as a helical span at residues 24 to 44; it reads GAIFLVCYPLYCVVCFVSVLC.

It is found in the membrane. This is an uncharacterized protein from Schizosaccharomyces pombe (strain 972 / ATCC 24843) (Fission yeast).